The chain runs to 175 residues: DELTA-stichotoxin-Hcr4a (175 aa).

A plays an important role in the hemolytic activity region spans residues 1–10 (ALAGAIIAGA). Positions 9–28 (GASLTFQILDKVLAELGQVS) are N-terminal region. 7 residues coordinate phosphocholine: Ser52, Val85, Ser103, Pro105, Tyr131, Tyr135, and Tyr136. The trp-rich region, which is important for the binding to lipid membrane stretch occupies residues 103–118 (SVPFDYNLYSNWWDVK).

It belongs to the actinoporin family. Sea anemone subfamily. As to quaternary structure, octamer or nonamer in membranes. Monomer in the soluble state.

It is found in the secreted. It localises to the nematocyst. Its subcellular location is the target cell membrane. In terms of biological role, pore-forming protein that forms cations-selective hydrophilic pores of around 1 nm and causes cardiac stimulation and cytolysis. Pore formation is a multi-step process that involves specific recognition of membrane sphingomyelin (but neither cholesterol nor phosphatidylcholine) using aromatic rich region and adjacent phosphocholine (POC) binding site, firm binding to the membrane (mainly driven by hydrophobic interactions) accompanied by the transfer of the N-terminal region to the lipid-water interface and finally pore formation after oligomerization of monomers. In Radianthus crispa (Leathery sea anemone), this protein is DELTA-stichotoxin-Hcr4a.